The chain runs to 274 residues: MPKVFLVKRRSPGVSVRSWDELPDDKRADTYIPVSLGCLLRDPPEDCRSDGGSSSGCSSSAGEPGGAESSSSPRAPEPETPELHDAQGTDGHLAAMQRPVARSKIKFTTGTCDNSVIHNCDLCGKSFRLQRMLNRHLKCHNQVKRHLCTFCGKGFNDTFDLKRHVRTHTGIRPYKCEVCNKAFTQRCSLESHLKKIHGVQQQYAYKQRRDKLYVCEDCGYTGPTQEDLYLHVNSDHPGSTFLKKTSKKLAALMQNKLTSPLQENSTLSEEEEKK.

Over residues methionine 1 to serine 11 the composition is skewed to basic residues. The interval methionine 1–glycine 88 is disordered. Residues serine 18 to aspartate 29 show a composition bias toward basic and acidic residues. Residues aspartate 50–arginine 74 are compositionally biased toward low complexity. 4 consecutive C2H2-type zinc fingers follow at residues histidine 118–histidine 140, histidine 146–histidine 168, tyrosine 174–histidine 197, and tyrosine 213–histidine 236. A Phosphoserine modification is found at serine 268.

Belongs to the krueppel C2H2-type zinc-finger protein family. In terms of assembly, interacts (via zinc-finger domains) with CEBPA (via bZIP domain); the interaction inhibits the transcription factor activity of CEBPA and is required to repress adipogenesis. In terms of tissue distribution, expressed highly in testis, specifically in spermatocytes. Expressed also in skin and at lower levels in the ovary. Expressed in adipose tissues. Expression is lower than in testis and a relatively higher expression level is detected in the stromal vascular fraction (SVF) than in fat cells themselves.

The protein resides in the nucleus. In terms of biological role, zinc-finger transcription repressor factor. Plays a critical role in maintaining the identity of epithelial lineages by suppressing epithelial-to mesenchymal transition (EMT) mainly through the repression of ZEB1, an EMT inducer. Positively regulates neuronal differentiation. Suppresses cell cycling and terminal differentiation of keratinocytes by directly repressing MYC and NOTCH1. Important for the correct development of primordial germ cells in embryos. Plays dual functions in thermogenesis and adipogenesis to maintain energy balance. Essential for brown/beige adipose tissue-mediated thermogenesis, is necessary for the development of brown adipocytes. In white adipose tissues, limits adipogenesis by blocking CEBPA binding to its transcriptional targets and inhibiting its transcription factor activity. This chain is Transcription factor Ovo-like 2, found in Mus musculus (Mouse).